Here is a 218-residue protein sequence, read N- to C-terminus: Glutathione S-transferase U24 (218 aa).

The region spanning 3 to 82 (DEVILLDFWA…YIDETWPDNN (80 aa)) is the GST N-terminal domain. Residues 13–14 (SM), 39–40 (NK), 53–54 (KI), and 66–67 (ES) each bind glutathione. In terms of domain architecture, GST C-terminal spans 88–215 (DPYKRAHAKF…TFISERRKKL (128 aa)). Position 148 is a phosphothreonine (Thr-148).

This sequence belongs to the GST superfamily. Tau family.

It is found in the cytoplasm. The protein localises to the cytosol. It carries out the reaction RX + glutathione = an S-substituted glutathione + a halide anion + H(+). In terms of biological role, may be involved in the conjugation of reduced glutathione to a wide number of exogenous and endogenous hydrophobic electrophiles and have a detoxification role against certain herbicides. This Arabidopsis thaliana (Mouse-ear cress) protein is Glutathione S-transferase U24 (GSTU24).